A 167-amino-acid polypeptide reads, in one-letter code: tRNA-specific adenosine deaminase (167 aa).

The region spanning 6–117 (FSHEYWMRHA…DAKTGAAGSL (112 aa)) is the CMP/dCMP-type deaminase domain. Position 57 (His-57) interacts with Zn(2+). Glu-59 functions as the Proton donor in the catalytic mechanism. Zn(2+) contacts are provided by Cys-87 and Cys-90.

The protein belongs to the cytidine and deoxycytidylate deaminase family. As to quaternary structure, homodimer. Zn(2+) is required as a cofactor.

The enzyme catalyses adenosine(34) in tRNA + H2O + H(+) = inosine(34) in tRNA + NH4(+). Functionally, catalyzes the deamination of adenosine to inosine at the wobble position 34 of tRNA(Arg2). Essential for cell viability. The chain is tRNA-specific adenosine deaminase from Escherichia coli (strain K12).